Here is a 223-residue protein sequence, read N- to C-terminus: MRLVIAQCTVDYVGRLTAHLPSARRLLLFKADGSVSVHADDRAYKPLNWMSPPCWLTEEPGGDSPVWVVTNKGGEQLRISVEEIEHDSSHELGVDPGLVKDGVEAHLQVLLAEHVQLLGEGYTLVRREYMTAIGPVDLLCRDESGGAVAVEIKRRGEIDGVEQLTRYLELLNRDSVLAPVKGVFAAQQIKPQARTLATDRGIRCVTLDYDKMRGMDSDEYRLF.

The protein belongs to the NucS endonuclease family.

Its subcellular location is the cytoplasm. Functionally, cleaves both 3' and 5' ssDNA extremities of branched DNA structures. The sequence is that of Endonuclease NucS from Mycobacterium marinum (strain ATCC BAA-535 / M).